Reading from the N-terminus, the 98-residue chain is Defensin (98 aa).

3 cysteine pairs are disulfide-bonded: Cys-61–Cys-88, Cys-74–Cys-94, and Cys-78–Cys-96.

It belongs to the invertebrate defensin family. Type 1 subfamily.

The polypeptide is Defensin (Mamestra brassicae (Cabbage moth)).